The sequence spans 149 residues: Transcription antitermination protein NusB (149 aa).

Belongs to the NusB family.

Functionally, involved in transcription antitermination. Required for transcription of ribosomal RNA (rRNA) genes. Binds specifically to the boxA antiterminator sequence of the ribosomal RNA (rrn) operons. The polypeptide is Transcription antitermination protein NusB (Acinetobacter baumannii (strain AB307-0294)).